A 104-amino-acid chain; its full sequence is SOSS complex subunit C (104 aa).

Alanine 2 carries the post-translational modification N-acetylalanine.

Belongs to the SOSS-C family. In terms of assembly, component of the SOSS complex, composed of SOSS-B (SOSS-B1/NABP2 or SOSS-B2/NABP1), SOSS-A/INTS3 and SOSS-C/INIP. SOSS complexes containing SOSS-B1/NABP2 are more abundant than complexes containing SOSS-B2/NABP1. Interacts with INTS3; the interaction is direct.

The protein localises to the nucleus. Component of the SOSS complex, a multiprotein complex that functions downstream of the MRN complex to promote DNA repair and G2/M checkpoint. The SOSS complex associates with single-stranded DNA at DNA lesions and influences diverse endpoints in the cellular DNA damage response including cell-cycle checkpoint activation, recombinational repair and maintenance of genomic stability. Required for efficient homologous recombination-dependent repair of double-strand breaks (DSBs) and ATM-dependent signaling pathways. In Bos taurus (Bovine), this protein is SOSS complex subunit C (INIP).